A 350-amino-acid chain; its full sequence is Casein kinase II subunit alpha' (350 aa).

In terms of domain architecture, Protein kinase spans 40 to 325; the sequence is YQLVRKLGRG…AKEAMEHPYF (286 aa). ATP-binding positions include 46–54 and Lys-69; that span reads LGRGKYSEV. The active-site Proton acceptor is the Asp-157.

This sequence belongs to the protein kinase superfamily. Ser/Thr protein kinase family. CK2 subfamily. In terms of assembly, tetramer composed of an alpha chain, an alpha' and two beta chains.

The enzyme catalyses L-seryl-[protein] + ATP = O-phospho-L-seryl-[protein] + ADP + H(+). It catalyses the reaction L-threonyl-[protein] + ATP = O-phospho-L-threonyl-[protein] + ADP + H(+). Its function is as follows. Casein kinases are operationally defined by their preferential utilization of acidic proteins such as caseins as substrates. The alpha and alpha' chains contain the catalytic site. Participates in Wnt signaling. The chain is Casein kinase II subunit alpha' from Gallus gallus (Chicken).